A 95-amino-acid polypeptide reads, in one-letter code: Small ribosomal subunit protein bS18 (95 aa).

This sequence belongs to the bacterial ribosomal protein bS18 family. Part of the 30S ribosomal subunit. Forms a tight heterodimer with protein bS6.

In terms of biological role, binds as a heterodimer with protein bS6 to the central domain of the 16S rRNA, where it helps stabilize the platform of the 30S subunit. This Rickettsia peacockii (strain Rustic) protein is Small ribosomal subunit protein bS18.